Reading from the N-terminus, the 132-residue chain is Large ribosomal subunit protein bL17 (132 aa).

Belongs to the bacterial ribosomal protein bL17 family. Part of the 50S ribosomal subunit. Contacts protein L32.

This Shewanella sediminis (strain HAW-EB3) protein is Large ribosomal subunit protein bL17.